The chain runs to 416 residues: UDP-N-acetylmuramoylalanine--D-glutamate ligase (416 aa).

Residue 108–114 (GTTGKTT) participates in ATP binding.

The protein belongs to the MurCDEF family.

It is found in the cytoplasm. It carries out the reaction UDP-N-acetyl-alpha-D-muramoyl-L-alanine + D-glutamate + ATP = UDP-N-acetyl-alpha-D-muramoyl-L-alanyl-D-glutamate + ADP + phosphate + H(+). It functions in the pathway cell wall biogenesis; peptidoglycan biosynthesis. Its function is as follows. Cell wall formation. Catalyzes the addition of glutamate to the nucleotide precursor UDP-N-acetylmuramoyl-L-alanine (UMA). This Chlamydia trachomatis serovar L2b (strain UCH-1/proctitis) protein is UDP-N-acetylmuramoylalanine--D-glutamate ligase.